We begin with the raw amino-acid sequence, 299 residues long: Beta-lactamase VEB-1 (299 aa).

A signal peptide spans 1–23 (MKIVKRILLVLLSLFFTIVYSNA). Ser-68 functions as the Nucleophile; acyl-ester intermediate in the catalytic mechanism. Positions 71, 131, and 167 each coordinate a beta-lactam. Residue Glu-167 is the Proton acceptor of the active site.

It belongs to the class-A beta-lactamase family.

It catalyses the reaction a beta-lactam + H2O = a substituted beta-amino acid. With respect to regulation, inhibited by the beta-lactamase-blocking agent clavulanic acid. Class A beta-lactamase which confers resistance to the beta-lactam antibiotics, including penicillins and cephalosporins, in E.coli strain JM109. Acts via hydrolysis of the beta-lactam ring. Has penicillin-, and cephalosporin-hydrolyzing activities. This chain is Beta-lactamase VEB-1, found in Pseudomonas aeruginosa.